The chain runs to 84 residues: Toxin Acra3 (84 aa).

The N-terminal stretch at 1–17 (MKIIFLVLMMILSEVYS) is a signal peptide. The region spanning 19 to 82 (RDGYPVHDGT…VYGDDGIFCK (64 aa)) is the LCN-type CS-alpha/beta domain. Cystine bridges form between cysteine 30/cysteine 81, cysteine 34/cysteine 57, cysteine 43/cysteine 62, and cysteine 47/cysteine 64. At serine 83 the chain carries Serine amide.

The protein belongs to the long (4 C-C) scorpion toxin superfamily. Sodium channel inhibitor family. Beta subfamily. Expressed by the venom gland.

It localises to the secreted. Its function is as follows. Toxin with unknown target. In vivo, induces severe neurotoxic events in mice such as excitability and convulsions, leading to the death of the animals within a few minutes after injection. Exerts very strong cytotoxic effect on a mouse brain tumor cell line (BC3H1) (IC(50)=5 mg/ml). It exerts its effects by inducing a stronger necrosis than apoptosis in BC3H1 cells. The sequence is that of Toxin Acra3 from Androctonus crassicauda (Arabian fat-tailed scorpion).